Reading from the N-terminus, the 390-residue chain is MGNLCSLFTPPKPVKKRKPITKRQSSIGASSSGSGLNSNRWNNRVRSSSSRRDNKFEDALIQEHALAAAAVLFRQQNGGGGSLPFDRSASQRYQGSCSKKNQLPRSSSSRSRSSTDPLLQPHQFLNQGIKLDDLETNHFVLVHGGSFGAWCWYKTIALLEEDGFKVTAIDLAGCGINSININGIASLSQYVKPLTDILEKLPIGEKVILVGHDFGGACISYAMELFPSKISKAVFLAAAMLTNGQSTLDMFSLKAGQNDLMRKAQIFIYTNGNENPPTAIDLDKSLLKDLLFNQSPSKDVALASVSMRSIPFAPVLEKLSLSDANYGSVRRYYIETLEDNAIPVTLQENMINSSPPEKVYRLKGADHAPFFSKPQALHKLLLEIARISPA.

Residues Met-1 to Arg-46 constitute a chloroplast transit peptide. Disordered stretches follow at residues Met-1–Arg-52 and Gln-94–Leu-119. Over residues Ser-25–Ser-48 the composition is skewed to low complexity. Positions Gln-94–Pro-104 are enriched in polar residues. Residues Arg-105–Ser-114 are compositionally biased toward low complexity. The AB hydrolase-1 domain occupies Asn-137–Leu-241. The active-site Acyl-ester intermediate is the Asp-213. Active-site charge relay system residues include Asp-339 and His-367.

This sequence belongs to the AB hydrolase superfamily. Methylesterase family.

It is found in the plastid. It localises to the chloroplast. Putative methylesterase. This chain is Putative methylesterase 11, chloroplastic, found in Arabidopsis thaliana (Mouse-ear cress).